The following is a 212-amino-acid chain: Cytidylate kinase (212 aa).

Residue 7–15 (GPAASGKGT) participates in ATP binding.

This sequence belongs to the cytidylate kinase family. Type 1 subfamily.

It localises to the cytoplasm. The catalysed reaction is CMP + ATP = CDP + ADP. It carries out the reaction dCMP + ATP = dCDP + ADP. The chain is Cytidylate kinase from Rhodopseudomonas palustris (strain ATCC BAA-98 / CGA009).